The sequence spans 99 residues: RNA-binding protein Hfq (99 aa).

A Sm domain is found at 9 to 68; it reads DPFLNALRRERVPVSIYLVNGIKLQGQIESFDQFVILLKNTVSQMVYKHAISTVVPSRPV. The interval 64–99 is disordered; sequence PSRPVSHHSNNPGGSNNYHGSNTTAQQQSQDADDAE. Residues 70 to 93 show a composition bias toward low complexity; sequence HHSNNPGGSNNYHGSNTTAQQQSQ.

Belongs to the Hfq family. In terms of assembly, homohexamer.

RNA chaperone that binds small regulatory RNA (sRNAs) and mRNAs to facilitate mRNA translational regulation in response to envelope stress, environmental stress and changes in metabolite concentrations. Also binds with high specificity to tRNAs. This Pectobacterium atrosepticum (strain SCRI 1043 / ATCC BAA-672) (Erwinia carotovora subsp. atroseptica) protein is RNA-binding protein Hfq.